Consider the following 343-residue polypeptide: MDKKDNIILAFESSCDETSVAVVKNGNEILSNIVATQVASHQRFGGVVPEVASRHHIEQITYCIQDALDEANVDYEDLDAVAVTYGPGLVGALLVGVAAAKAIAFAHNLPLIPVNHMAGHIYAARFIGEIKFPALALLVSGGHTELVYMPEENKFQIIGETRDDAAGEAFDKVGRVMGMKYPSGKEIDELAKTGKDTFNFPRAMEKEDNFDFSFSGLKSAFINTVHHASQIGEKLDKADLATSFEQSVVDVLSSKTVKALGHFKVKQLILAGGVAANQGLRTRLDKELTAFKDVELLKAPLKLCGDNAAMIGAAGYVAFKHGVRADMTLNAEPSLEFEWMVEK.

Fe cation-binding residues include His-116 and His-120. Residues 138-142 (LVSGG), Asp-171, Gly-184, Asp-188, and Asn-277 each bind substrate. Asp-306 lines the Fe cation pocket.

This sequence belongs to the KAE1 / TsaD family. It depends on Fe(2+) as a cofactor.

The protein localises to the cytoplasm. It carries out the reaction L-threonylcarbamoyladenylate + adenosine(37) in tRNA = N(6)-L-threonylcarbamoyladenosine(37) in tRNA + AMP + H(+). Required for the formation of a threonylcarbamoyl group on adenosine at position 37 (t(6)A37) in tRNAs that read codons beginning with adenine. Is involved in the transfer of the threonylcarbamoyl moiety of threonylcarbamoyl-AMP (TC-AMP) to the N6 group of A37, together with TsaE and TsaB. TsaD likely plays a direct catalytic role in this reaction. This chain is tRNA N6-adenosine threonylcarbamoyltransferase, found in Ligilactobacillus salivarius (strain UCC118) (Lactobacillus salivarius).